Consider the following 510-residue polypeptide: 2,3-bisphosphoglycerate-independent phosphoglycerate mutase (510 aa).

A Mn(2+)-binding site is contributed by aspartate 12. Tyrosine 36 carries the post-translational modification Phosphotyrosine. Serine 62 provides a ligand contact to Mn(2+). Serine 62 (phosphoserine intermediate) is an active-site residue. Residues histidine 123, 153-154, arginine 185, arginine 191, 261-264, and lysine 336 each bind substrate; these read RD and RPDR. Positions 403, 407, 444, 445, and 462 each coordinate Mn(2+).

It belongs to the BPG-independent phosphoglycerate mutase family. In terms of assembly, monomer. The cofactor is Mn(2+).

It carries out the reaction (2R)-2-phosphoglycerate = (2R)-3-phosphoglycerate. It functions in the pathway carbohydrate degradation; glycolysis; pyruvate from D-glyceraldehyde 3-phosphate: step 3/5. Essential for rapid growth and for sporulation. Catalyzes the interconversion of 2-phosphoglycerate and 3-phosphoglycerate. The polypeptide is 2,3-bisphosphoglycerate-independent phosphoglycerate mutase (Shouchella clausii (strain KSM-K16) (Alkalihalobacillus clausii)).